The sequence spans 490 residues: MAQSKLDEVVSLAKRRGFVFPAGEIYGGTRSAWDYGPLGVALKDNIKREWWRSMVVTRPDVVGVDTSIILPPEVWVASGHVSVFNDPLVECLNCHKRNRADKLEESYAEKHGDKMPENGMKDIVCPNCGIRGQWTEPRDFNMMLRTHLGPVEDENSLHYLRPETAQGIFVDFKNVMTSSRSRPPFGIANMGKSFRNEITPGNFIFRTREFEQMEMEFFVTPGTDEEWHQYWIDARTRWYIDLGVKPENLRHYEHPKEKLSHYSKRTVDIEYKFGFQGSDWGELEGIANRTDYDLSAHSKHSGEDLSYFNQATGEKYVPYVIEPAAGLTRSLMCFLVDAYDVDEAPNTKGGVDKRTVLRLDPRLAPVKAAVLPLSKKPELQTVAQNLADDLRFNEWMIDYDESGAIGRRYRRQDEIGTPLCITVDFDTLEDHAVTIRERDTMAQERVALDKVADYVAARIGEKRTRVPLKPVEMGGEPWPESGVQEAGGLY.

Arg99 and Glu163 together coordinate substrate. Residues 195–197 (RNE), 205–210 (FRTREF), 282–283 (EL), and 326–329 (GLTR) contribute to the ATP site. Residue 210-214 (FEQME) coordinates substrate. 322-326 (EPAAG) is a substrate binding site. The interval 470–490 (PVEMGGEPWPESGVQEAGGLY) is disordered.

This sequence belongs to the class-II aminoacyl-tRNA synthetase family. In terms of assembly, homodimer.

It localises to the cytoplasm. It carries out the reaction tRNA(Gly) + glycine + ATP = glycyl-tRNA(Gly) + AMP + diphosphate. In terms of biological role, catalyzes the attachment of glycine to tRNA(Gly). This Bifidobacterium longum (strain NCC 2705) protein is Glycine--tRNA ligase.